We begin with the raw amino-acid sequence, 120 residues long: Holo-[acyl-carrier-protein] synthase (120 aa).

Mg(2+) contacts are provided by D6 and E55.

The protein belongs to the P-Pant transferase superfamily. AcpS family. The cofactor is Mg(2+).

It is found in the cytoplasm. It carries out the reaction apo-[ACP] + CoA = holo-[ACP] + adenosine 3',5'-bisphosphate + H(+). In terms of biological role, transfers the 4'-phosphopantetheine moiety from coenzyme A to a Ser of acyl-carrier-protein. This chain is Holo-[acyl-carrier-protein] synthase, found in Pelodictyon phaeoclathratiforme (strain DSM 5477 / BU-1).